We begin with the raw amino-acid sequence, 465 residues long: Ribulose bisphosphate carboxylase large chain (465 aa).

K4 is modified (N6,N6,N6-trimethyllysine). Substrate-binding residues include N113 and T163. Residue K165 is the Proton acceptor of the active site. Residue K167 coordinates substrate. Positions 191, 193, and 194 each coordinate Mg(2+). N6-carboxylysine is present on K191. H284 functions as the Proton acceptor in the catalytic mechanism. Substrate-binding residues include R285, H317, and S369.

The protein belongs to the RuBisCO large chain family. Type I subfamily. Heterohexadecamer of 8 large chains and 8 small chains; disulfide-linked. The disulfide link is formed within the large subunit homodimers. Mg(2+) is required as a cofactor. The disulfide bond which can form in the large chain dimeric partners within the hexadecamer appears to be associated with oxidative stress and protein turnover.

It is found in the plastid. It localises to the chloroplast. The catalysed reaction is 2 (2R)-3-phosphoglycerate + 2 H(+) = D-ribulose 1,5-bisphosphate + CO2 + H2O. It catalyses the reaction D-ribulose 1,5-bisphosphate + O2 = 2-phosphoglycolate + (2R)-3-phosphoglycerate + 2 H(+). Functionally, ruBisCO catalyzes two reactions: the carboxylation of D-ribulose 1,5-bisphosphate, the primary event in carbon dioxide fixation, as well as the oxidative fragmentation of the pentose substrate in the photorespiration process. Both reactions occur simultaneously and in competition at the same active site. The sequence is that of Ribulose bisphosphate carboxylase large chain from Eucommia ulmoides (Hardy rubber tree).